Consider the following 355-residue polypeptide: MEKEESTNKNNENIQSENEINKIDNKSNTENPTIKCIFKKPNKQRNIRKRSDDLILNTSNNADEEDEDGNEEKDKKKLKSKINQYTTKQDKKNEFSYDSSGNAGSSINSAELSSTQYMNEEEEFKKEVVLSSSRNNNNNNNNNNNNNNDNISNSEGSGGSDNNDDGIYRGMKSYSTFVEKKSDLTYKGGGVKAGPMKTSTTFKLSNRIDHQPDVCKDYKQTGQCTFGDACKFLHDRSDYKSGWQIDKEYEEEQKQKRLNNINGIKNNNNDNKNNDDDKEQQQFPFACFICKKQYVDPVQTKCKHFFCEDCALTHNRKNKKCALCGEPTLGTFITPPKKILDQLMEISKSHFKNQS.

The disordered stretch occupies residues 1–167 (MEKEESTNKN…GGSDNNDDGI (167 aa)). Residues 8-18 (NKNNENIQSEN) are compositionally biased toward low complexity. Residues 37 to 48 (IFKKPNKQRNIR) are compositionally biased toward basic residues. The span at 62–71 (ADEEDEDGNE) shows a compositional bias: acidic residues. Composition is skewed to low complexity over residues 99 to 110 (SSGNAGSSINSA) and 131 to 155 (SSSR…SNSE). The C3H1-type zinc finger occupies 214-237 (VCKDYKQTGQCTFGDACKFLHDRS). The disordered stretch occupies residues 258–277 (LNNINGIKNNNNDNKNNDDD). Low complexity predominate over residues 259-271 (NNINGIKNNNNDN). An RING-type zinc finger spans residues 287 to 325 (CFICKKQYVDPVQTKCKHFFCEDCALTHNRKNKKCALCG).

This is RING finger protein 113 homolog (rnf113) from Dictyostelium discoideum (Social amoeba).